The following is a 219-amino-acid chain: MDQLEMKKLAAQAALEYVKADTIVGVGSGSTVNCFIEALGTIKNKIQGAVAASKASEELLRKQGIEVFNANDVSSLDIYVDGADEINPQKMMIKGGGAALTREKIVAALAKKFICIVDSSKQVDVLGSTFPLPVEVIPMARSQVGRKLVALGGAPEYREGVVTDNGNVILDVHNFSILNPVEMEKELNNVAGVATNGIFALRGADVVIVGTPEGAKIID.

Residues 28–31, 81–84, and 94–97 contribute to the substrate site; these read SGST, DGAD, and KGGG. The Proton acceptor role is filled by glutamate 103. Residue lysine 121 coordinates substrate.

This sequence belongs to the ribose 5-phosphate isomerase family. As to quaternary structure, homodimer.

It catalyses the reaction aldehydo-D-ribose 5-phosphate = D-ribulose 5-phosphate. It functions in the pathway carbohydrate degradation; pentose phosphate pathway; D-ribose 5-phosphate from D-ribulose 5-phosphate (non-oxidative stage): step 1/1. Its function is as follows. Catalyzes the reversible conversion of ribose-5-phosphate to ribulose 5-phosphate. The sequence is that of Ribose-5-phosphate isomerase A from Haemophilus influenzae (strain PittEE).